A 192-amino-acid polypeptide reads, in one-letter code: A-type ATP synthase subunit E (192 aa).

This sequence belongs to the V-ATPase E subunit family. As to quaternary structure, has multiple subunits with at least A(3), B(3), C, D, E, F, H, I and proteolipid K(x).

The protein resides in the cell membrane. Component of the A-type ATP synthase that produces ATP from ADP in the presence of a proton gradient across the membrane. This Metallosphaera sedula (strain ATCC 51363 / DSM 5348 / JCM 9185 / NBRC 15509 / TH2) protein is A-type ATP synthase subunit E.